The following is a 182-amino-acid chain: Guanylate kinase (182 aa).

One can recognise a Guanylate kinase-like domain in the interval 2–180; the sequence is GTLTVITGPS…ALLKLEGLMG (179 aa). An ATP-binding site is contributed by 9-16; the sequence is GPSGVGKG.

It belongs to the guanylate kinase family.

The protein resides in the cytoplasm. The enzyme catalyses GMP + ATP = GDP + ADP. The catalysed reaction is dZMP + ATP = dZDP + ADP. The protein operates within purine metabolism. In terms of biological role, essential for recycling GMP and indirectly, cGMP. Functionally, (Microbial infection) Catalyzes the phosphorylation of dZMP to dZDP, when the bacterium is infected by a phage that produces the substrate for the synthesis of dZTP (2- amino-2'-deoxyadenosine 5'-triphosphate), which is then used by the phage as a DNA polymerase substrate. The protein is Guanylate kinase of Parasynechococcus marenigrum (strain WH8102).